A 514-amino-acid chain; its full sequence is HMG box-containing protein 1 (514 aa).

The interval 150-182 (ARPPPVSSSSKSEPAFPHHHWKEETPVRHERAN) is disordered. Over residues 170 to 182 (WKEETPVRHERAN) the composition is skewed to basic and acidic residues. The 143-residue stretch at 203-345 (WCNSWPSTVW…PPGHPDAINF (143 aa)) folds into the AXH domain. The segment at residues 434–502 (CKRPMNAFML…EQKRLNPDCW (69 aa)) is a DNA-binding region (HMG box).

In terms of assembly, binds the second PAH repeat of SIN3A. Binds TCF4. Binds RB1. In terms of processing, ubiquitinated by the CTLH E3 ubiquitin-protein ligase complex, leading to subsequent proteasomal degradation.

It is found in the nucleus. In terms of biological role, transcriptional repressor that binds to the promoter region of target genes. Plays a role in the regulation of the cell cycle and of the Wnt pathway. Binds preferentially to the sequence 5'-TTCATTCATTCA-3'. Binding to the histone H1.0 promoter is enhanced by interaction with RB1. Disrupts the interaction between DNA and TCF4. The chain is HMG box-containing protein 1 (HBP1) from Homo sapiens (Human).